The chain runs to 196 residues: Holliday junction branch migration complex subunit RuvA (196 aa).

The interval 1 to 63 (MINKIYGKIV…DDDVKLFGFL (63 aa)) is domain I. The segment at 64–142 (NISEREVFED…KGDESSSYML (79 aa)) is domain II. A region of interest (flexible linker) is located at residue Lys143. The domain III stretch occupies residues 143-196 (KFKELEQSIVNMGFDRKLVVVAFREIMLSDKFLILKEAEQEQFLFTETLKRLSV).

The protein belongs to the RuvA family. Homotetramer. Forms an RuvA(8)-RuvB(12)-Holliday junction (HJ) complex. HJ DNA is sandwiched between 2 RuvA tetramers; dsDNA enters through RuvA and exits via RuvB. An RuvB hexamer assembles on each DNA strand where it exits the tetramer. Each RuvB hexamer is contacted by two RuvA subunits (via domain III) on 2 adjacent RuvB subunits; this complex drives branch migration. In the full resolvosome a probable DNA-RuvA(4)-RuvB(12)-RuvC(2) complex forms which resolves the HJ.

The protein localises to the cytoplasm. The RuvA-RuvB-RuvC complex processes Holliday junction (HJ) DNA during genetic recombination and DNA repair, while the RuvA-RuvB complex plays an important role in the rescue of blocked DNA replication forks via replication fork reversal (RFR). RuvA specifically binds to HJ cruciform DNA, conferring on it an open structure. The RuvB hexamer acts as an ATP-dependent pump, pulling dsDNA into and through the RuvAB complex. HJ branch migration allows RuvC to scan DNA until it finds its consensus sequence, where it cleaves and resolves the cruciform DNA. This Borrelia duttonii (strain Ly) protein is Holliday junction branch migration complex subunit RuvA.